Here is a 1357-residue protein sequence, read N- to C-terminus: DNA-directed RNA polymerase subunit beta (1357 aa).

The protein belongs to the RNA polymerase beta chain family. In terms of assembly, the RNAP catalytic core consists of 2 alpha, 1 beta, 1 beta' and 1 omega subunit. When a sigma factor is associated with the core the holoenzyme is formed, which can initiate transcription.

It catalyses the reaction RNA(n) + a ribonucleoside 5'-triphosphate = RNA(n+1) + diphosphate. Its function is as follows. DNA-dependent RNA polymerase catalyzes the transcription of DNA into RNA using the four ribonucleoside triphosphates as substrates. The protein is DNA-directed RNA polymerase subunit beta of Pseudomonas fluorescens (strain ATCC BAA-477 / NRRL B-23932 / Pf-5).